The primary structure comprises 641 residues: Phosphomethylpyrimidine synthase (641 aa).

Substrate-binding positions include N221, M250, Y279, H315, 335 to 337 (SRG), 376 to 379 (DGLR), and E415. H419 contacts Zn(2+). Y442 serves as a coordination point for substrate. H483 serves as a coordination point for Zn(2+). [4Fe-4S] cluster-binding residues include C563, C566, and C571.

It belongs to the ThiC family. Homodimer. Requires [4Fe-4S] cluster as cofactor.

It carries out the reaction 5-amino-1-(5-phospho-beta-D-ribosyl)imidazole + S-adenosyl-L-methionine = 4-amino-2-methyl-5-(phosphooxymethyl)pyrimidine + CO + 5'-deoxyadenosine + formate + L-methionine + 3 H(+). It participates in cofactor biosynthesis; thiamine diphosphate biosynthesis. Its function is as follows. Catalyzes the synthesis of the hydroxymethylpyrimidine phosphate (HMP-P) moiety of thiamine from aminoimidazole ribotide (AIR) in a radical S-adenosyl-L-methionine (SAM)-dependent reaction. The polypeptide is Phosphomethylpyrimidine synthase (Rhodopseudomonas palustris (strain BisA53)).